We begin with the raw amino-acid sequence, 261 residues long: Protein OSB1, mitochondrial (261 aa).

The N-terminal 28 residues, 1–28 (MNTFFKLGSLIQRTASQISSSFPKSRFF), are a transit peptide targeting the mitochondrion. One can recognise an SSB domain in the interval 55–155 (VNSVSLMGFV…VKVAEVNYVA (101 aa)). Residues 189-238 (WQVFFSNPYDWWDNRRNKKNPKQPDFKHKDTGEALWLCSDLPDWITRRLE) form a PDF region region.

As to expression, expressed in root elongation zone and in gametophytic cells.

The protein resides in the mitochondrion. Functionally, regulates mitochondrial DNA recombination. Represses homologous recombination, preventing mitochondrial genome instability and unbalanced transmission of alternative mtDNA configurations. Binds preferentially single-stranded DNA. Does not bind to RNA. The protein is Protein OSB1, mitochondrial (OSB1) of Arabidopsis thaliana (Mouse-ear cress).